We begin with the raw amino-acid sequence, 271 residues long: MTDLKTIIEEAYQNKDNFTTDTVPKKIHQAIHQTIELLDNGELRIAEKQNGQWNTNEWAKMAILLYFKTEPLKTFDAGYTFFYDKIPLKYTNNTSQPQSGVRVVPHAIVRKGAYLAPNTVLMPSYINIGAYVDSGTLIDTWATVGSCAQIGKNVHLSGGAGIGGVLEPLQAHPTIIEDDCFIGARSEIVEGVMVEKGSVISMGVFVGQSTPIYNRQTQEITYGRIPAGSVVIPGSLPSKDGHYNRYSAIIVKQVDEKTRSKVSLNELLREG.

The protein belongs to the transferase hexapeptide repeat family.

It localises to the cytoplasm. It catalyses the reaction (S)-2,3,4,5-tetrahydrodipicolinate + succinyl-CoA + H2O = (S)-2-succinylamino-6-oxoheptanedioate + CoA. Its pathway is amino-acid biosynthesis; L-lysine biosynthesis via DAP pathway; LL-2,6-diaminopimelate from (S)-tetrahydrodipicolinate (succinylase route): step 1/3. This is 2,3,4,5-tetrahydropyridine-2,6-dicarboxylate N-succinyltransferase from Coxiella burnetii (strain CbuG_Q212) (Coxiella burnetii (strain Q212)).